The primary structure comprises 315 residues: Glutamyl-Q tRNA(Asp) synthetase (315 aa).

Residues 23–27 (RFAPS) and Glu59 contribute to the L-glutamate site. Residues 26–36 (PSPTGPLHIGS) carry the 'HIGH' region motif. Positions 115, 117, 142, and 146 each coordinate Zn(2+). 2 residues coordinate L-glutamate: Tyr202 and Arg220. A 'KMSKS' region motif is present at residues 258 to 262 (KLSKQ). Lys261 lines the ATP pocket.

The protein belongs to the class-I aminoacyl-tRNA synthetase family. GluQ subfamily. Zn(2+) serves as cofactor.

Functionally, catalyzes the tRNA-independent activation of glutamate in presence of ATP and the subsequent transfer of glutamate onto a tRNA(Asp). Glutamate is transferred on the 2-amino-5-(4,5-dihydroxy-2-cyclopenten-1-yl) moiety of the queuosine in the wobble position of the QUC anticodon. This Ralstonia nicotianae (strain ATCC BAA-1114 / GMI1000) (Ralstonia solanacearum) protein is Glutamyl-Q tRNA(Asp) synthetase.